Here is a 230-residue protein sequence, read N- to C-terminus: Large ribosomal subunit protein uL1 (230 aa).

It belongs to the universal ribosomal protein uL1 family. In terms of assembly, part of the 50S ribosomal subunit.

In terms of biological role, binds directly to 23S rRNA. The L1 stalk is quite mobile in the ribosome, and is involved in E site tRNA release. Protein L1 is also a translational repressor protein, it controls the translation of the L11 operon by binding to its mRNA. The polypeptide is Large ribosomal subunit protein uL1 (Bradyrhizobium diazoefficiens (strain JCM 10833 / BCRC 13528 / IAM 13628 / NBRC 14792 / USDA 110)).